The chain runs to 519 residues: O-fucosyltransferase 1 (519 aa).

Topologically, residues 1 to 24 are cytoplasmic; that stretch reads MRRLGHHRLHGKTGGVGTKGMVAK. Residues 25–45 traverse the membrane as a helical; Signal-anchor for type II membrane protein segment; that stretch reads LSIGVIVLLICTLSLLFSANI. The Lumenal portion of the chain corresponds to 46 to 519; that stretch reads GSNREPTRPS…TNSTVTGLER (474 aa). The segment at 67 to 86 is disordered; sequence KSGGWRPSSAPRSDWPPPTK. N-linked (GlcNAc...) asparagine glycosylation is present at N118. 260 to 262 lines the substrate pocket; sequence HLR. N-linked (GlcNAc...) asparagine glycans are attached at residues N327, N357, and N511. The tract at residues 497 to 519 is disordered; sequence RLESIRDPDSTSQTNSTVTGLER. A compositionally biased stretch (polar residues) spans 506-519; the sequence is STSQTNSTVTGLER.

It belongs to the glycosyltransferase GT106 family.

Its subcellular location is the golgi apparatus membrane. Its pathway is glycan metabolism. The sequence is that of O-fucosyltransferase 1 from Arabidopsis thaliana (Mouse-ear cress).